The chain runs to 832 residues: MMEEEELEFVEELEAVLQLTPEVQLAIEQVFPSQDPLDRADFNAVEYINTLFPTEQSLANIDEVVNKIRLKIRRLDDNIRTVVRGQTNVGQDGRQALEEAQKAIQQLFGKIKDIKDKAEKSEQMVKEITRDIKQLDHAKRHLTTSITTLNHLHMLAGGVDSLEAMTRRRQYGEVANLLQGVMNVLEHFHKYMGIPQIRQLSERVKAAQTELGQQILADFEEAFPSQGTKRPGGPSNVLRDACLVANILDPRIKQEIIKKFIKQHLSEYLVLFQENQDVAWLDKIDRRYAWIKRQLVDYEEKYGRMFPREWCMAERIAVEFCHVTRAELAKIMRTRAKEIEVKLLLFAIQRTTNFEGFLAKRFSGCTLTDGTLKKLESPPPSTNPFLEDEPTPEMEELATEKGDLDQPKKPKAPDNPFHGIVSKCFEPHLYVYIESQDKNLGELIDRFVADFKAQGPPKPNTDEGGAVLPSCADLFVYYKKCMVQCSQLSTGEPMIALTTIFQKYLREYAWKILSGNLPKTTTSSGGLTISSLLKEKEGSEVAKFTLEELCLICNILSTAEYCLATTQQLEEKLKEKVDVSLIERINLTGEMDTFSTVISSSIQLLVQDLDAACDPALTAMSKMQWQNVEHVGDQSPYVTSVILHIKQNVPIIRDNLASTRKYFTQFCVKFANSFIPKFITHLFKCKPISMVGAEQLLLDTHSLKMVLLDLPSISSQVVRKAPASYTKIVVKGMTRAEMILKVVMAPHEPLVVFVDNYIKLLTDCNTETFQKILDMKGLKRSEQSSMLELLRQRLPAPPSGAESSGSLSLTAPTPEQESSRIRKLEKLIKKRL.

The stretch at 97 to 138 (LEEAQKAIQQLFGKIKDIKDKAEKSEQMVKEITRDIKQLDHA) forms a coiled coil. N6-acetyllysine occurs at positions 110 and 360. The tract at residues 373–412 (KKLESPPPSTNPFLEDEPTPEMEELATEKGDLDQPKKPKA) is disordered. The residue at position 377 (serine 377) is a Phosphoserine. The segment covering 386 to 397 (LEDEPTPEMEEL) has biased composition (acidic residues). At threonine 391 the chain carries Phosphothreonine. The span at 398–412 (ATEKGDLDQPKKPKA) shows a compositional bias: basic and acidic residues. Residue serine 580 is modified to Phosphoserine. The disordered stretch occupies residues 794–822 (LPAPPSGAESSGSLSLTAPTPEQESSRIR). A compositionally biased stretch (low complexity) spans 799-809 (SGAESSGSLSL).

Belongs to the VPS53 family. Component of the Golgi-associated retrograde protein (GARP) complex, also called VFT (VPS fifty-three) complex, composed of VPS51, VPS52, VPS53 and VPS54. Component of the endosome-associated retrograde protein (EARP) complex, composed of VPS51, VPS52, VPS53 and VPS50/Syndetin. EIPR1 interacts with both EARP and GARP complexes and mediates the recruitment of the GARP complex to the trans-Golgi network. Interacts with VPS50 in an EIPR1-independent manner.

The protein localises to the golgi apparatus. Its subcellular location is the trans-Golgi network membrane. The protein resides in the endosome membrane. It localises to the recycling endosome. In terms of biological role, acts as a component of the GARP complex that is involved in retrograde transport from early and late endosomes to the trans-Golgi network (TGN). The GARP complex is required for the maintenance of the cycling of mannose 6-phosphate receptors between the TGN and endosomes, this cycling is necessary for proper lysosomal sorting of acid hydrolases such as CTSD. Acts as a component of the EARP complex that is involved in endocytic recycling. The EARP complex associates with Rab4-positive endosomes and promotes recycling of internalized transferrin receptor (TFRC) to the plasma membrane. This is Vacuolar protein sorting-associated protein 53 homolog (VPS53) from Homo sapiens (Human).